The following is a 908-amino-acid chain: Oxysterol-binding protein 2 (908 aa).

Residues 42 to 112 (SAFGSGPASK…GLWPGSENGT (71 aa)) form a disordered region. Residues 81 to 90 (EPGSQTTSVP) are compositionally biased toward polar residues. In terms of domain architecture, PH spans 179 to 271 (LDSYKGWLLK…WITALELAKA (93 aa)). Disordered stretches follow at residues 279–299 (TQSD…DNSE), 413–445 (RAFC…SEED), and 822–843 (LMER…EKQR). The residue at position 284 (S284) is a Phosphoserine. Residues 424–437 (SSSKSFSEGSFLTS) show a composition bias toward low complexity.

This sequence belongs to the OSBP family. As to quaternary structure, interacts with CCDC159. In terms of tissue distribution, expressed in the testis (at protein level). Expressed in postmeiotic germ cells of the testis.

The protein localises to the membrane. Its subcellular location is the cytoplasmic vesicle. The protein resides in the secretory vesicle. It is found in the acrosome. Its function is as follows. Binds 7-ketocholesterol. Acts during spermatid development where its function is required prior to the removal of cytoplasm from the sperm head. This Mus musculus (Mouse) protein is Oxysterol-binding protein 2 (Osbp2).